Reading from the N-terminus, the 167-residue chain is uncharacterized protein (167 aa).

Positions 1–13 (MQGDIRRKKDLLP) are enriched in basic and acidic residues. 2 disordered regions span residues 1 to 26 (MQGD…SRRR) and 67 to 167 (ESHS…ILDN). The span at 71 to 80 (SDVSASASDH) shows a compositional bias: low complexity. The segment covering 102 to 156 (VPKEKFNNEVAKQQEVKNLENDLKPQIDSEKQKQINKDKKEQKQQLQKEKQDLAK) has biased composition (basic and acidic residues).

This is an uncharacterized protein from Saccharomyces cerevisiae (strain ATCC 204508 / S288c) (Baker's yeast).